We begin with the raw amino-acid sequence, 131 residues long: Protein ApaG (131 aa).

One can recognise an ApaG domain in the interval 7 to 131; sequence PVKPYDLTVS…FLLAMPRTLH (125 aa).

The protein is Protein ApaG of Bordetella bronchiseptica (strain ATCC BAA-588 / NCTC 13252 / RB50) (Alcaligenes bronchisepticus).